Consider the following 127-residue polypeptide: Major sperm protein 55/57 (127 aa).

Ala-2 carries the N-acetylalanine modification. The region spanning 9 to 126 is the MSP domain; the sequence is DIQTQPGTKI…RRKNLPIEYN (118 aa).

As to expression, sperm.

It localises to the cell projection. The protein localises to the pseudopodium. Its subcellular location is the cytoplasm. The protein resides in the cytoskeleton. Its function is as follows. Central component in molecular interactions underlying sperm crawling. Forms an extensive filament system that extends from sperm villipoda, along the leading edge of the pseudopod. This chain is Major sperm protein 55/57 (msp-55), found in Caenorhabditis elegans.